The chain runs to 296 residues: UBX domain-containing protein 1-A (296 aa).

One can recognise a UBA domain in the interval 1–42 (MAECSTLESLIEMGFSSTRAEKALTATGNQGIEPAMDWLVEH). Residues 43 to 216 (EDDPDIDEPS…VQEPPTKKEY (174 aa)) are disordered. Over residues 61–75 (TDTADTTDTTDTTDT) the composition is skewed to low complexity. Basic and acidic residues-rich tracts occupy residues 86–100 (PLTE…KRMM), 107–123 (QNER…EQEK), and 138–178 (KMQE…DRAR). A coiled-coil region spans residues 87 to 177 (LTEEEKEKQT…KIARDKADRA (91 aa)). Over residues 191-206 (PAETSIPATTPSPSSP) the composition is skewed to low complexity. The UBX domain occupies 214–293 (KEYDQCRIQV…GLVPTAVLIV (80 aa)).

Its subcellular location is the cytoplasm. In terms of biological role, component of a complex required to couple deglycosylation and proteasome-mediated degradation of misfolded proteins in the endoplasmic reticulum that are retrotranslocated in the cytosol. Involved in ubiquitin-proteasome systems. The polypeptide is UBX domain-containing protein 1-A (ubxn1-a) (Xenopus laevis (African clawed frog)).